We begin with the raw amino-acid sequence, 281 residues long: MPELPEVETVRLGLTPALVGERLSRVAARRPALRLPIPVDLVQRLTGKVVGSLDRRAKYLLLRMIDGPVALIHLGMSGSMTVGPLAGHAEPGPHDHILFETEAGLRVTFRDPRRFGLITLAEPETLDDHPLLAKLGPEPLSEAFDAEVLVRRLNGRQAPIKAALLDQGVVAGLGNIYVSEALFRAGISPLRPAASVTGAWAEALVAAIRAVLGEAIAAGGSSLRDHRQTDGALGYFQHRFAVYDRVGQPCPGCDCDVARTGGIERMVQSGRSTFFCGRRQR.

Pro2 functions as the Schiff-base intermediate with DNA in the catalytic mechanism. Glu3 functions as the Proton donor in the catalytic mechanism. The active-site Proton donor; for beta-elimination activity is the Lys58. DNA contacts are provided by His94, Arg113, and Arg156. The segment at 241-281 adopts an FPG-type; degenerate zinc-finger fold; sequence AVYDRVGQPCPGCDCDVARTGGIERMVQSGRSTFFCGRRQR. The active-site Proton donor; for delta-elimination activity is the Arg271.

Belongs to the FPG family. Monomer. The cofactor is Zn(2+).

The enzyme catalyses Hydrolysis of DNA containing ring-opened 7-methylguanine residues, releasing 2,6-diamino-4-hydroxy-5-(N-methyl)formamidopyrimidine.. It carries out the reaction 2'-deoxyribonucleotide-(2'-deoxyribose 5'-phosphate)-2'-deoxyribonucleotide-DNA = a 3'-end 2'-deoxyribonucleotide-(2,3-dehydro-2,3-deoxyribose 5'-phosphate)-DNA + a 5'-end 5'-phospho-2'-deoxyribonucleoside-DNA + H(+). Involved in base excision repair of DNA damaged by oxidation or by mutagenic agents. Acts as a DNA glycosylase that recognizes and removes damaged bases. Has a preference for oxidized purines, such as 7,8-dihydro-8-oxoguanine (8-oxoG). Has AP (apurinic/apyrimidinic) lyase activity and introduces nicks in the DNA strand. Cleaves the DNA backbone by beta-delta elimination to generate a single-strand break at the site of the removed base with both 3'- and 5'-phosphates. This Rhodospirillum rubrum (strain ATCC 11170 / ATH 1.1.1 / DSM 467 / LMG 4362 / NCIMB 8255 / S1) protein is Formamidopyrimidine-DNA glycosylase.